The chain runs to 371 residues: 2-aminoethylphosphonate--pyruvate transaminase (371 aa).

Lys-195 carries the N6-(pyridoxal phosphate)lysine modification.

The protein belongs to the class-V pyridoxal-phosphate-dependent aminotransferase family. PhnW subfamily. As to quaternary structure, homodimer. It depends on pyridoxal 5'-phosphate as a cofactor.

The enzyme catalyses (2-aminoethyl)phosphonate + pyruvate = phosphonoacetaldehyde + L-alanine. Involved in phosphonate degradation. This is 2-aminoethylphosphonate--pyruvate transaminase from Pseudomonas aeruginosa (strain UCBPP-PA14).